Reading from the N-terminus, the 492-residue chain is Catalase isozyme 3 (492 aa).

Residues histidine 65 and asparagine 138 contribute to the active site. A heme-binding site is contributed by tyrosine 347.

It belongs to the catalase family. Homotetramer. The cofactor is heme. Abundant in green cotyledons, etiolated cotyledons, green hypocotyl and root, but not in young leaf.

The protein localises to the peroxisome. It catalyses the reaction 2 H2O2 = O2 + 2 H2O. Functionally, occurs in almost all aerobically respiring organisms and serves to protect cells from the toxic effects of hydrogen peroxide. The protein is Catalase isozyme 3 (CAT3) of Cucurbita pepo (Vegetable marrow).